Here is a 127-residue protein sequence, read N- to C-terminus: Large ribosomal subunit protein eL8 (127 aa).

This sequence belongs to the eukaryotic ribosomal protein eL8 family. In terms of assembly, part of the 50S ribosomal subunit. Probably part of the RNase P complex.

Its subcellular location is the cytoplasm. Functionally, multifunctional RNA-binding protein that recognizes the K-turn motif in ribosomal RNA, the RNA component of RNase P, box H/ACA, box C/D and box C'/D' sRNAs. The chain is Large ribosomal subunit protein eL8 from Hyperthermus butylicus (strain DSM 5456 / JCM 9403 / PLM1-5).